The primary structure comprises 131 residues: MATIATGLNIATQRVFVTSENRPVCLAGPVHLNNSWNLGSRTTNRMMKLQPIKAAPEGGISDVVEKSIKEAQETCAGDPVSGECVAAWDEVEELSAAASHARDKKKADGSDPLEEYCKDNPETNECRTYDN.

The N-terminal 53 residues, 1–53 (MATIATGLNIATQRVFVTSENRPVCLAGPVHLNNSWNLGSRTTNRMMKLQPIK), are a transit peptide targeting the chloroplast. Disulfide bonds link Cys75–Cys84 and Cys117–Cys126. The disordered stretch occupies residues 97-131 (AASHARDKKKADGSDPLEEYCKDNPETNECRTYDN). Positions 105-131 (KKADGSDPLEEYCKDNPETNECRTYDN) are enriched in basic and acidic residues.

Belongs to the CP12 family. As to quaternary structure, monomer. Component of a complex that contains two dimers of PRK, two tetramers of GAPDH and CP12. CP12 associates with GAPDH, causing its conformation to change. This GAPDH/CP12 complex binds PRK to form a half-complex (one unit). This unit probably dimerizes due partially to interactions between the enzymes of each unit. In terms of processing, contains two disulfide bonds; only the oxidized protein, with two disulfide bonds, is active in complex formation. The C-terminal disulfide is involved in the interaction with GAPDH and the N-terminal disulfide mediates the binding of PRK with this binary complex. In terms of tissue distribution, mostly expressed in cotyledons, leaves and flower stalks, and, to a lower extent, in flowers and stems. Barely detectable in roots and siliques.

Its subcellular location is the plastid. It is found in the chloroplast. Functionally, acts as a linker essential in the assembly of a core complex of PRK/GAPDH. Coordinates the reversible inactivation of chloroplast enzymes GAPDH and PRK during darkness in photosynthetic tissues. This Arabidopsis thaliana (Mouse-ear cress) protein is Calvin cycle protein CP12-2, chloroplastic (CP12-2).